The chain runs to 228 residues: Urease accessory protein UreF (228 aa).

Belongs to the UreF family. As to quaternary structure, ureD, UreF and UreG form a complex that acts as a GTP-hydrolysis-dependent molecular chaperone, activating the urease apoprotein by helping to assemble the nickel containing metallocenter of UreC. The UreE protein probably delivers the nickel.

It is found in the cytoplasm. Its function is as follows. Required for maturation of urease via the functional incorporation of the urease nickel metallocenter. This Prochlorococcus marinus (strain MIT 9312) protein is Urease accessory protein UreF.